Consider the following 300-residue polypeptide: 3-methyl-2-oxobutanoate hydroxymethyltransferase (300 aa).

2 residues coordinate Mg(2+): aspartate 75 and aspartate 118. 3-methyl-2-oxobutanoate-binding positions include 75 to 76 (DS), aspartate 118, and lysine 147. Glutamate 149 serves as a coordination point for Mg(2+). The Proton acceptor role is filled by glutamate 216.

The protein belongs to the PanB family. Homodecamer; pentamer of dimers. Mg(2+) is required as a cofactor.

It localises to the cytoplasm. It catalyses the reaction 3-methyl-2-oxobutanoate + (6R)-5,10-methylene-5,6,7,8-tetrahydrofolate + H2O = 2-dehydropantoate + (6S)-5,6,7,8-tetrahydrofolate. It functions in the pathway cofactor biosynthesis; (R)-pantothenate biosynthesis; (R)-pantoate from 3-methyl-2-oxobutanoate: step 1/2. Catalyzes the reversible reaction in which hydroxymethyl group from 5,10-methylenetetrahydrofolate is transferred onto alpha-ketoisovalerate to form ketopantoate. The sequence is that of 3-methyl-2-oxobutanoate hydroxymethyltransferase from Verminephrobacter eiseniae (strain EF01-2).